The chain runs to 907 residues: Probable dipeptidyl-aminopeptidase B (907 aa).

A compositionally biased stretch (basic and acidic residues) spans 1 to 26 (MPRQRAPKEEEAELLTKQERSTRSSE). Residues 1 to 70 (MPRQRAPKEE…EKYTDEDDEA (70 aa)) form a disordered region. Over 1-93 (MPRQRAPKEE…PVAVDKKTRR (93 aa)) the chain is Cytoplasmic. Low complexity predominate over residues 30–44 (DASVSSISTTSLVLE). The helical; Signal-anchor for type II membrane protein transmembrane segment at 94–114 (WLWIVGIACVTGWALALVFFL) threads the bilayer. Residues 115–907 (MSGSYKHVST…SQVDARLERR (793 aa)) are Vacuolar-facing. The N-linked (GlcNAc...) asparagine glycan is linked to N560. Residue S751 is the Charge relay system of the active site. N805 carries N-linked (GlcNAc...) asparagine glycosylation. Residues D828 and H861 each act as charge relay system in the active site.

It belongs to the peptidase S9B family.

It localises to the vacuole membrane. It carries out the reaction Release of an N-terminal dipeptide, Xaa-Yaa-|-Zaa-, from a polypeptide, preferentially when Yaa is Pro, provided Zaa is neither Pro nor hydroxyproline.. Type IV dipeptidyl-peptidase which removes N-terminal dipeptides sequentially from polypeptides having unsubstituted N-termini provided that the penultimate residue is proline. The polypeptide is Probable dipeptidyl-aminopeptidase B (dapB) (Pyrenophora teres f. teres (strain 0-1) (Barley net blotch fungus)).